The sequence spans 175 residues: Nudix hydrolase 25 (175 aa).

One can recognise a Nudix hydrolase domain in the interval 7–155 (GYRPNVGVCL…KRPTYEEVIK (149 aa)). Mn(2+)-binding residues include Gly-40, Glu-55, and Glu-59. The short motif at 40–61 (GGIEDGEDPKSAAMRELQEETG) is the Nudix box element.

Belongs to the Nudix hydrolase family. Mn(2+) is required as a cofactor.

The enzyme catalyses P(1),P(4)-bis(5'-guanosyl) tetraphosphate + H2O = GMP + GTP + 2 H(+). Mediates the hydrolysis of diadenosine 5',5''-P(1)P(4) tetraphosphate (Ap(4)A), a signaling molecule involved in regulation of DNA replication and repair. The sequence is that of Nudix hydrolase 25 from Arabidopsis thaliana (Mouse-ear cress).